Reading from the N-terminus, the 173-residue chain is Lens fiber membrane intrinsic protein (173 aa).

Over 1–3 (MYS) the chain is Cytoplasmic. The helical transmembrane segment at 4–24 (FMGGGLFCAWVGTILLVVAMA) threads the bilayer. Topologically, residues 25–66 (TDHWMQYRLSGSFAHQGLWRYCLGNKCYLQTDSIAYWNATRA) are extracellular. C-linked (Man) tryptophan glycans are attached at residues tryptophan 43 and tryptophan 61. Asparagine 62 is a glycosylation site (N-linked (GlcNAc...) asparagine). The helical transmembrane segment at 67-87 (FMILSALCAISGIIMGIMAFA) threads the bilayer. Residues 88–98 (HQPTFSRISRP) lie on the Cytoplasmic side of the membrane. The helical transmembrane segment at 99–119 (FSAGIMFFSSTLFVVLALAIY) threads the bilayer. The Extracellular segment spans residues 120–140 (TGVTVSFLGRRFGDWRFSWSY). Residues 141-161 (ILGWVAVLMTFFAGIFYMCAY) traverse the membrane as a helical segment. Topologically, residues 162 to 173 (RVHECRRLSTPR) are cytoplasmic. At serine 170 the chain carries Phosphoserine. Phosphothreonine is present on threonine 171.

The protein belongs to the PMP-22/EMP/MP20 family. Seems to be associated with itself or another lens membrane component via disulfide bonds. In terms of tissue distribution, eye lens specific.

The protein resides in the membrane. Functionally, present in the thicker 16-17 nm junctions of mammalian lens fiber cells, where it may contribute to cell junctional organization. Acts as a receptor for calmodulin. May play an important role in both lens development and cataractogenesis. In Homo sapiens (Human), this protein is Lens fiber membrane intrinsic protein (LIM2).